Here is a 73-residue protein sequence, read N- to C-terminus: Beta-defensin 50 (73 aa).

The first 23 residues, 1–23 (MKTLHLLLLISGLLSVFVKGVGS), serve as a signal peptide directing secretion. Disulfide bonds link C34-C63 and C46-C64.

It belongs to the beta-defensin family.

The protein resides in the secreted. Has bactericidal activity. The sequence is that of Beta-defensin 50 (Defb50) from Rattus norvegicus (Rat).